The sequence spans 34 residues: Cycloamanide B proprotein (34 aa).

The propeptide occupies 1 to 10; that stretch reads MSDINAARLP. Residues 11 to 17 constitute a cross-link (cyclopeptide (Ser-Pro)); that stretch reads SFFFPIP. The propeptide occupies 18 to 34; sequence CISDDIEMVLTRGESLC.

Belongs to the MSDIN fungal toxin family. Post-translationally, processed by the macrocyclase-peptidase enzyme POPB to yield a cyclic decapeptide. POPB first removes 10 residues from the N-terminus. Conformational trapping of the remaining peptide forces the enzyme to release this intermediate rather than proceed to macrocyclization. The enzyme rebinds the remaining peptide in a different conformation and catalyzes macrocyclization of the N-terminal 7 residues.

Functionally, cyclic heptapeptide that belongs to the MSDIN-like toxin family responsible for a large number of food poisoning cases and deaths. Cycloaminide B is non-toxic to mammals but shows immunosuppressive activity, probably through the inhibition of the action of interleukin-1 and interleukin-2. This chain is Cycloamanide B proprotein, found in Amanita phalloides (Death cap).